Consider the following 178-residue polypeptide: MNIIQQLEAEQAAKIEAKRTLPEFSPGDTVRVNVKVTEGNRTRVQAYEGVCIARSGGGLQENFTVRKISYGEGVERVFPVYSPMIESVDVVRRGKVRRAKLYYLRDRRGKSARIVEDTGVRARKLNDAERAAVAEEKARIDAEKVAAAQALAAEKAAAEAAEAKAAAEAAAAAETAAE.

It belongs to the bacterial ribosomal protein bL19 family.

Its function is as follows. This protein is located at the 30S-50S ribosomal subunit interface and may play a role in the structure and function of the aminoacyl-tRNA binding site. The sequence is that of Large ribosomal subunit protein bL19 from Rhizobium etli (strain ATCC 51251 / DSM 11541 / JCM 21823 / NBRC 15573 / CFN 42).